The sequence spans 131 residues: Interleukin-13 (131 aa).

Residues 1–18 form the signal peptide; sequence MALWLTVVIALTCLGGLA. Residues asparagine 38, asparagine 48, asparagine 56, and asparagine 71 are each glycosylated (N-linked (GlcNAc...) asparagine). 2 disulfide bridges follow: cysteine 47–cysteine 75 and cysteine 63–cysteine 89.

This sequence belongs to the IL-4/IL-13 family. As to quaternary structure, interacts with IL13RA2.

Its subcellular location is the secreted. Cytokine that plays important roles in allergic inflammation and immune response to parasite infection. Synergizes with IL2 in regulating interferon-gamma synthesis. Stimulates B-cell proliferation, and activation of eosinophils, basophils, and mast cells. Plays an important role in controlling IL33 activity by modulating the production of transmembrane and soluble forms of interleukin-1 receptor-like 1/IL1RL1. Displays the capacity to antagonize Th1-driven proinflammatory immune response and downregulates synthesis of many proinflammatory cytokines including IL1, IL6, IL10, IL12 and TNF-alpha through a mechanism that partially involves suppression of NF-kappa-B. Also functions on nonhematopoietic cells, including endothelial cells where it induces vascular cell adhesion protein 1/VCAM1, which is important in the recruitment of eosinophils. Exerts its biological effects through its receptors which comprises the IL4R chain and the IL13RA1 chain, to activate JAK1 and TYK2, leading to the activation of STAT6. Aside from IL13RA1, another receptor IL13RA2 acts as a high affinity decoy for IL13 and mediates internalization and depletion of extracellular IL13. The chain is Interleukin-13 (IL13) from Canis lupus familiaris (Dog).